The sequence spans 249 residues: 3-deoxy-manno-octulosonate cytidylyltransferase (249 aa).

Belongs to the KdsB family.

The protein localises to the cytoplasm. It carries out the reaction 3-deoxy-alpha-D-manno-oct-2-ulosonate + CTP = CMP-3-deoxy-beta-D-manno-octulosonate + diphosphate. It functions in the pathway nucleotide-sugar biosynthesis; CMP-3-deoxy-D-manno-octulosonate biosynthesis; CMP-3-deoxy-D-manno-octulosonate from 3-deoxy-D-manno-octulosonate and CTP: step 1/1. The protein operates within bacterial outer membrane biogenesis; lipopolysaccharide biosynthesis. Functionally, activates KDO (a required 8-carbon sugar) for incorporation into bacterial lipopolysaccharide in Gram-negative bacteria. This is 3-deoxy-manno-octulosonate cytidylyltransferase from Serratia proteamaculans (strain 568).